The sequence spans 175 residues: Replication restart protein PriC (175 aa).

This sequence belongs to the PriC family. As to quaternary structure, monomer. Oligomerizes in the absence of DNA. Component of the replication restart primosome, which is composed of PriA, PriB, PriC, DnaB and DnaT; DnaG primase associates transiently with this complex. Interacts with the C-terminus of SSB; this interaction is required for DnaB loading onto substrate replication forks. Interacts with DnaB alone and in the DnaB-DnaC complex, probably 1:1 binding with DnaB.

Its function is as follows. Involved in the restart of stalled replication forks, which reloads the replicative helicase (DnaB) on sites other than the origin of replication. Recognizes abandoned replication forks and remodels DNA single-stranded binding protein (SSB) on ssDNA to uncover a loading site for DnaB. There are several restart pathways, the PriA-PriC pathway is a minor restart pathway. Also part of the minor PriC-Rep pathway for restart of stalled replication forks, which has a different substrate specificity than PriA. priB and priC have redundant roles in the cell. Stimulates the 3'-5' helicase activity of Rep helicase in vitro. In vitro can load the DnaB replicative helicase from a DnaB-DnaC complex on an SSB-coated stalled replication fork with no leading- or lagging-strand (or with a gap between the leading strand and fork junction) in the absence of other primosome proteins (PriA, PriB or DnaT). Also part of the major restart pathway with PriA, PriB, DnaB, DnaT and DnaG primase. PriC may contribute to the stability of the preprimosome complex. Preferentially binds approximately 7-9 nucleotides of single-stranded (ss)DNA, also binds double-stranded (ds)DNA. PriB is probably more important in the cell than PriC. The protein is Replication restart protein PriC of Escherichia coli (strain K12).